A 294-amino-acid polypeptide reads, in one-letter code: ATP synthase gamma chain (294 aa).

The protein belongs to the ATPase gamma chain family. F-type ATPases have 2 components, CF(1) - the catalytic core - and CF(0) - the membrane proton channel. CF(1) has five subunits: alpha(3), beta(3), gamma(1), delta(1), epsilon(1). CF(0) has three main subunits: a, b and c.

The protein resides in the cell inner membrane. Produces ATP from ADP in the presence of a proton gradient across the membrane. The gamma chain is believed to be important in regulating ATPase activity and the flow of protons through the CF(0) complex. The sequence is that of ATP synthase gamma chain from Nitrosomonas europaea (strain ATCC 19718 / CIP 103999 / KCTC 2705 / NBRC 14298).